Reading from the N-terminus, the 1306-residue chain is Putative late blight resistance protein homolog R1A-10 (1306 aa).

2 coiled-coil regions span residues Ser-407–Gln-428 and Pro-520–Ser-542. An NB-ARC domain is found at Arg-521–Gly-808. Gly-554 to Thr-561 provides a ligand contact to ATP. 11 LRR repeats span residues Ala-858–His-881, Leu-921–Asn-935, Phe-936–Arg-961, Leu-979–Met-1007, Leu-1010–Asp-1035, Thr-1057–Phe-1081, Pro-1082–Pro-1106, Tyr-1110–His-1129, Leu-1130–Asn-1153, Phe-1156–Asn-1181, and Glu-1216–Leu-1240. Positions Leu-1240–Leu-1306 constitute an HMA domain.

This sequence belongs to the disease resistance NB-LRR family.

It is found in the cytoplasm. The protein resides in the membrane. Confers resistance to late blight (Phytophthora infestans) races carrying the avirulence gene Avr1. Resistance proteins guard the plant against pathogens that contain an appropriate avirulence protein via an indirect interaction with this avirulence protein. That triggers a defense system including the hypersensitive response, which restricts the pathogen growth. The protein is Putative late blight resistance protein homolog R1A-10 (R1A-10) of Solanum demissum (Wild potato).